The primary structure comprises 229 residues: Potassium/proton antiporter CemA (229 aa).

A run of 4 helical transmembrane segments spans residues 7–27 (FTPL…SLSF), 114–134 (LICF…LLIL), 154–174 (ILLL…ELMI), and 189–209 (IISG…KYWI).

It belongs to the CemA family.

It is found in the plastid. The protein resides in the chloroplast inner membrane. The enzyme catalyses K(+)(in) + H(+)(out) = K(+)(out) + H(+)(in). In terms of biological role, contributes to K(+)/H(+) antiport activity by supporting proton efflux to control proton extrusion and homeostasis in chloroplasts in a light-dependent manner to modulate photosynthesis. Prevents excessive induction of non-photochemical quenching (NPQ) under continuous-light conditions. Indirectly promotes efficient inorganic carbon uptake into chloroplasts. The polypeptide is Potassium/proton antiporter CemA (Gossypium barbadense (Sea Island cotton)).